We begin with the raw amino-acid sequence, 281 residues long: NADPH-dependent 7-cyano-7-deazaguanine reductase (281 aa).

A substrate-binding site is contributed by 87 to 89 (VES). NADPH is bound at residue 89–90 (SK). Residue Cys-188 is the Thioimide intermediate of the active site. Catalysis depends on Asp-195, which acts as the Proton donor. 227-228 (HE) is a substrate binding site. 256 to 257 (RG) contacts NADPH.

The protein belongs to the GTP cyclohydrolase I family. QueF type 2 subfamily. Homodimer.

It localises to the cytoplasm. The enzyme catalyses 7-aminomethyl-7-carbaguanine + 2 NADP(+) = 7-cyano-7-deazaguanine + 2 NADPH + 3 H(+). Its pathway is tRNA modification; tRNA-queuosine biosynthesis. Its function is as follows. Catalyzes the NADPH-dependent reduction of 7-cyano-7-deazaguanine (preQ0) to 7-aminomethyl-7-deazaguanine (preQ1). This Aliivibrio salmonicida (strain LFI1238) (Vibrio salmonicida (strain LFI1238)) protein is NADPH-dependent 7-cyano-7-deazaguanine reductase.